We begin with the raw amino-acid sequence, 183 residues long: uncharacterized protein (183 aa).

This sequence belongs to the asfivirus S183L family.

This is an uncharacterized protein from African swine fever virus (isolate Pig/Kenya/KEN-50/1950) (ASFV).